A 343-amino-acid polypeptide reads, in one-letter code: GDSL esterase/lipase EXL6 (343 aa).

The signal sequence occupies residues Met1 to Ala21. An N-linked (GlcNAc...) asparagine glycan is attached at Asn24. The active-site Nucleophile is the Ser36. Catalysis depends on residues Asp318 and His321.

Belongs to the 'GDSL' lipolytic enzyme family. As to expression, flower buds and pollen.

It is found in the secreted. Its subcellular location is the extracellular space. The protein localises to the extracellular matrix. The protein resides in the pollen coat. Its function is as follows. Required for the formation of pollen coats and male fertility. This Arabidopsis thaliana (Mouse-ear cress) protein is GDSL esterase/lipase EXL6 (EXL6).